A 299-amino-acid polypeptide reads, in one-letter code: Pyridoxal 5'-phosphate synthase subunit PdxS (299 aa).

Asp-24 lines the D-ribose 5-phosphate pocket. The Schiff-base intermediate with D-ribose 5-phosphate role is filled by Lys-81. Gly-153 lines the D-ribose 5-phosphate pocket. Arg-165 contributes to the D-glyceraldehyde 3-phosphate binding site. D-ribose 5-phosphate contacts are provided by residues Gly-219 and 240-241 (GS).

The protein belongs to the PdxS/SNZ family. As to quaternary structure, in the presence of PdxT, forms a dodecamer of heterodimers.

The enzyme catalyses aldehydo-D-ribose 5-phosphate + D-glyceraldehyde 3-phosphate + L-glutamine = pyridoxal 5'-phosphate + L-glutamate + phosphate + 3 H2O + H(+). Its pathway is cofactor biosynthesis; pyridoxal 5'-phosphate biosynthesis. In terms of biological role, catalyzes the formation of pyridoxal 5'-phosphate from ribose 5-phosphate (RBP), glyceraldehyde 3-phosphate (G3P) and ammonia. The ammonia is provided by the PdxT subunit. Can also use ribulose 5-phosphate and dihydroxyacetone phosphate as substrates, resulting from enzyme-catalyzed isomerization of RBP and G3P, respectively. The chain is Pyridoxal 5'-phosphate synthase subunit PdxS from Methanococcus maripaludis (strain C7 / ATCC BAA-1331).